The sequence spans 428 residues: Histidine--tRNA ligase (428 aa).

This sequence belongs to the class-II aminoacyl-tRNA synthetase family. As to quaternary structure, homodimer.

The protein localises to the cytoplasm. The enzyme catalyses tRNA(His) + L-histidine + ATP = L-histidyl-tRNA(His) + AMP + diphosphate + H(+). This Chlamydia muridarum (strain MoPn / Nigg) protein is Histidine--tRNA ligase (hisS).